The chain runs to 492 residues: Beta-glucosidase 38 (492 aa).

A signal peptide spans 1 to 21; that stretch reads MNMPLLLLIAIVVVSLSHGNG. Glutamine 45 provides a ligand contact to a beta-D-glucoside. N-linked (GlcNAc...) asparagine glycans are attached at residues asparagine 73 and asparagine 77. Residues histidine 146 and 191-192 contribute to the a beta-D-glucoside site; that span reads NE. Glutamate 192 functions as the Proton donor in the catalytic mechanism. Residues cysteine 211 and cysteine 214 are joined by a disulfide bond. N-linked (GlcNAc...) asparagine glycosylation occurs at asparagine 310. Tyrosine 331 lines the a beta-D-glucoside pocket. Asparagine 341 is a glycosylation site (N-linked (GlcNAc...) asparagine). An a beta-D-glucoside-binding site is contributed by glutamate 400. Glutamate 400 acts as the Nucleophile in catalysis. A glycan (N-linked (GlcNAc...) asparagine) is linked at asparagine 408. A beta-D-glucoside is bound by residues tryptophan 447, 454–455, and phenylalanine 463; that span reads EW.

It belongs to the glycosyl hydrolase 1 family.

The catalysed reaction is Hydrolysis of terminal, non-reducing beta-D-glucosyl residues with release of beta-D-glucose.. This chain is Beta-glucosidase 38 (BGLU38), found in Oryza sativa subsp. japonica (Rice).